A 518-amino-acid polypeptide reads, in one-letter code: Allene oxide synthase, chloroplastic (518 aa).

The transit peptide at 1-33 (MASISTPFPISLHPKTVRSKPLKFRVLTRPIKA) directs the protein to the chloroplast. 3 residues coordinate heme b: lysine 133, histidine 164, and lysine 168. 2 residues coordinate (13S)-hydroperoxy-(9Z,11E)-octadecadienoate: asparagine 321 and threonine 389. 2 residues coordinate (13S)-hydroperoxy-(9Z,11E,15Z)-octadecatrienoate: asparagine 321 and threonine 389. The heme b site is built by lysine 469 and cysteine 471.

This sequence belongs to the cytochrome P450 family. The cofactor is heme b.

It is found in the plastid. It localises to the chloroplast. The protein localises to the plastoglobule. The catalysed reaction is (13S)-hydroperoxy-(9Z,11E,15Z)-octadecatrienoate = (9Z,13S,15Z)-12,13-epoxyoctadeca-9,11,15-trienoate + H2O. It carries out the reaction (13S)-hydroperoxy-(9Z,11E)-octadecadienoate = (9Z,13S)-12,13-epoxyoctadeca-9,11-dienoate + H2O. It functions in the pathway lipid metabolism; oxylipin biosynthesis. Functionally, cytochrome P450 enzyme involved in the biosynthesis of oxylipin jasmonates, important phytohormones acting as growth regulators and signaling molecules for plant defense. Functions as an allene oxide synthase that converts hydroperoxy fatty acids to unstable allene epoxides. Catalyzes the dehydration of 13-HPOTE ((13S)-hydroperoxy-(9Z,11E,15Z)-octadecatrienoate), as well as 13-HPODE ((13S)-hydroperoxy-(9Z,11E)-octadecadienoate). This Arabidopsis thaliana (Mouse-ear cress) protein is Allene oxide synthase, chloroplastic (CYP74A).